Reading from the N-terminus, the 268-residue chain is Tryptophan synthase alpha chain (268 aa).

Catalysis depends on proton acceptor residues Glu-49 and Asp-60.

It belongs to the TrpA family. As to quaternary structure, tetramer of two alpha and two beta chains.

The enzyme catalyses (1S,2R)-1-C-(indol-3-yl)glycerol 3-phosphate + L-serine = D-glyceraldehyde 3-phosphate + L-tryptophan + H2O. The protein operates within amino-acid biosynthesis; L-tryptophan biosynthesis; L-tryptophan from chorismate: step 5/5. In terms of biological role, the alpha subunit is responsible for the aldol cleavage of indoleglycerol phosphate to indole and glyceraldehyde 3-phosphate. This Dechloromonas aromatica (strain RCB) protein is Tryptophan synthase alpha chain.